The following is a 328-amino-acid chain: Malate dehydrogenase (328 aa).

Position 12–18 (12–18 (GAAGQIG)) interacts with NAD(+). Residues Arg95 and Arg101 each contribute to the substrate site. Residues Asn108, Gln115, and 132 to 134 (VGN) contribute to the NAD(+) site. Substrate is bound by residues Asn134 and Arg165. His190 serves as the catalytic Proton acceptor.

Belongs to the LDH/MDH superfamily. MDH type 2 family.

The enzyme catalyses (S)-malate + NAD(+) = oxaloacetate + NADH + H(+). In terms of biological role, catalyzes the reversible oxidation of malate to oxaloacetate. This chain is Malate dehydrogenase, found in Polaromonas sp. (strain JS666 / ATCC BAA-500).